A 345-amino-acid chain; its full sequence is Tropomodulin-4 (345 aa).

Residues 42 to 63 (NMLLPAGLRQRDQTKKSPTGPL) are disordered.

This sequence belongs to the tropomodulin family. Binds to the N-terminus of tropomyosin and to actin.

The protein localises to the cytoplasm. It is found in the cytoskeleton. Blocks the elongation and depolymerization of the actin filaments at the pointed end. The Tmod/TM complex contributes to the formation of the short actin protofilament, which in turn defines the geometry of the membrane skeleton. This is Tropomodulin-4 (TMOD4) from Bos taurus (Bovine).